The chain runs to 887 residues: Multiple RNA-binding domain-containing protein 1 (887 aa).

Residues 2 to 94 (SRIIVKGLPV…SKIEVSMAKS (93 aa)) enclose the RRM 1 domain. Disordered stretches follow at residues 121 to 143 (KLLQ…NIDD), 203 to 276 (KEEN…RNLA), and 297 to 336 (SEAE…DEEL). Phosphoserine is present on residues Ser-220 and Ser-264. Residues 264 to 276 (SDEKENEKRRNLA) show a composition bias toward basic and acidic residues. The segment covering 306 to 315 (SSYATEQNES) has biased composition (polar residues). Positions 316-325 (LDTKKEEQPE) are enriched in basic and acidic residues. 4 RRM domains span residues 345-423 (GRLF…PGEE), 532-604 (KVIL…RGPK), 663-746 (VSIF…LSHR), and 763-840 (GKII…YAEE). Residues 864 to 887 (EMAALRNGGGRKKLDVDDEENEGF) form a disordered region.

It belongs to the RRM MRD1 family. As to quaternary structure, interacts with NOP1. Binds to the 35S pre-rRNA and the U3 snoRNA.

The protein resides in the nucleus. Functionally, involved in pre-rRNA processing. Required for maintaining steady-state levels of 40S ribosomal subunit. Required for the initial processing of pre-rRNA at the A0 to A2 sites, leading to the processing of the 23S pre-rRNA intermediate to the 18S rRNA. In Saccharomyces cerevisiae (strain ATCC 204508 / S288c) (Baker's yeast), this protein is Multiple RNA-binding domain-containing protein 1 (MRD1).